Reading from the N-terminus, the 98-residue chain is NADH-ubiquinone oxidoreductase chain 4L (98 aa).

The next 3 helical transmembrane spans lie at 1 to 21 (MNLIDLILIAIYVIGISGLIF), 26 to 46 (IINILIISELNLGTLGMLFVL), and 61 to 81 (LYILTFTAAESAIGLAIVVIL).

Belongs to the complex I subunit 4L family.

The protein resides in the mitochondrion membrane. The catalysed reaction is a ubiquinone + NADH + 5 H(+)(in) = a ubiquinol + NAD(+) + 4 H(+)(out). Core subunit of the mitochondrial membrane respiratory chain NADH dehydrogenase (Complex I) that is believed to belong to the minimal assembly required for catalysis. Complex I functions in the transfer of electrons from NADH to the respiratory chain. The immediate electron acceptor for the enzyme is believed to be ubiquinone. This is NADH-ubiquinone oxidoreductase chain 4L (nad4L) from Dictyostelium discoideum (Social amoeba).